Consider the following 109-residue polypeptide: Thiosulfate sulfurtransferase GlpE (109 aa).

The Rhodanese domain occupies 16 to 104 (RSNGAVVVDI…WRATFPSETA (89 aa)). Catalysis depends on cysteine 64, which acts as the Cysteine persulfide intermediate.

The protein belongs to the GlpE family.

It is found in the cytoplasm. It carries out the reaction thiosulfate + hydrogen cyanide = thiocyanate + sulfite + 2 H(+). It catalyses the reaction thiosulfate + [thioredoxin]-dithiol = [thioredoxin]-disulfide + hydrogen sulfide + sulfite + 2 H(+). Transferase that catalyzes the transfer of sulfur from thiosulfate to thiophilic acceptors such as cyanide or dithiols. May function in a CysM-independent thiosulfate assimilation pathway by catalyzing the conversion of thiosulfate to sulfite, which can then be used for L-cysteine biosynthesis. This chain is Thiosulfate sulfurtransferase GlpE, found in Ectopseudomonas mendocina (strain ymp) (Pseudomonas mendocina).